The sequence spans 378 residues: Envelope glycoprotein M (378 aa).

Residues methionine 1–lysine 16 lie on the Intravirion side of the membrane. A helical transmembrane segment spans residues leucine 17–phenylalanine 37. Residues proline 38–threonine 84 are Virion surface-facing. The helical transmembrane segment at phenylalanine 85–alanine 105 threads the bilayer. Over lysine 106 to glutamine 118 the chain is Intravirion. The helical transmembrane segment at tryptophan 119–isoleucine 139 threads the bilayer. Over glutamine 140–histidine 150 the chain is Virion surface. Residues isoleucine 151–cysteine 171 traverse the membrane as a helical segment. Residues tyrosine 172–glutamine 210 are Intravirion-facing. The chain crosses the membrane as a helical span at residues leucine 211–asparagine 231. Topologically, residues serine 232–aspartate 239 are virion surface. A helical membrane pass occupies residues isoleucine 240–glutamate 260. Residues leucine 261–threonine 268 are Intravirion-facing. A helical transmembrane segment spans residues phenylalanine 269 to tryptophan 289. At arginine 290–proline 303 the chain is on the virion surface side. The chain crosses the membrane as a helical span at residues isoleucine 304 to leucine 324. Residues arginine 325–leucine 378 lie on the Intravirion side of the membrane. The disordered stretch occupies residues arginine 347–leucine 378. The segment covering glycine 363–leucine 378 has biased composition (acidic residues).

The protein belongs to the herpesviridae glycoprotein M family. As to quaternary structure, interacts (via N-terminus) with gN (via N-terminus). The gM-gN heterodimer forms the gCII complex.

It is found in the virion membrane. Its subcellular location is the host Golgi apparatus. The protein localises to the host trans-Golgi network. It localises to the host endosome membrane. The protein resides in the host nucleus inner membrane. Functionally, envelope glycoprotein important for virion assembly and egress. Plays a role in the correct incorporation of gH-gL into virion membrane. Directs the glycoprotein N (gN) to the host trans-Golgi network. The chain is Envelope glycoprotein M from Equus caballus (Horse).